The primary structure comprises 942 residues: Genome polyprotein (942 aa).

A Peptidase C4 domain is found at Glu1–Asn90. Residue Cys26 is the For nuclear inclusion protein A activity of the active site. Positions Glu349–Val472 constitute a RdRp catalytic domain. Positions Asn633–Asn678 are disordered. Residues Pro659–Ser669 show a composition bias toward low complexity.

It belongs to the potyviridae genome polyprotein family. Post-translationally, genome polyprotein of potyviruses undergoes post-translational proteolytic processing by the main proteinase NIa-pro resulting in the production of at least ten individual proteins. The P1 proteinase and the HC-pro cleave only their respective C-termini autocatalytically. 6K1 is essential for proper proteolytic separation of P3 from CI.

It is found in the virion. The enzyme catalyses RNA(n) + a ribonucleoside 5'-triphosphate = RNA(n+1) + diphosphate. The catalysed reaction is Hydrolyzes glutaminyl bonds, and activity is further restricted by preferences for the amino acids in P6 - P1' that vary with the species of potyvirus, e.g. Glu-Xaa-Xaa-Tyr-Xaa-Gln-|-(Ser or Gly) for the enzyme from tobacco etch virus. The natural substrate is the viral polyprotein, but other proteins and oligopeptides containing the appropriate consensus sequence are also cleaved.. Has RNA-binding and proteolytic activities. In terms of biological role, an RNA-dependent RNA polymerase that plays an essential role in the virus replication. Its function is as follows. Involved in aphid transmission, cell-to-cell and systemis movement, encapsidation of the viral RNA and in the regulation of viral RNA amplification. The protein is Genome polyprotein of Brome streak virus (strain German) (BStV).